Consider the following 258-residue polypeptide: Imidazole glycerol phosphate synthase subunit HisF (258 aa).

Active-site residues include Asp11 and Asp130.

The protein belongs to the HisA/HisF family. As to quaternary structure, heterodimer of HisH and HisF.

It localises to the cytoplasm. The enzyme catalyses 5-[(5-phospho-1-deoxy-D-ribulos-1-ylimino)methylamino]-1-(5-phospho-beta-D-ribosyl)imidazole-4-carboxamide + L-glutamine = D-erythro-1-(imidazol-4-yl)glycerol 3-phosphate + 5-amino-1-(5-phospho-beta-D-ribosyl)imidazole-4-carboxamide + L-glutamate + H(+). It participates in amino-acid biosynthesis; L-histidine biosynthesis; L-histidine from 5-phospho-alpha-D-ribose 1-diphosphate: step 5/9. In terms of biological role, IGPS catalyzes the conversion of PRFAR and glutamine to IGP, AICAR and glutamate. The HisF subunit catalyzes the cyclization activity that produces IGP and AICAR from PRFAR using the ammonia provided by the HisH subunit. The polypeptide is Imidazole glycerol phosphate synthase subunit HisF (Nitrobacter hamburgensis (strain DSM 10229 / NCIMB 13809 / X14)).